The sequence spans 690 residues: Long-chain fatty acid transport protein 5 (690 aa).

Residues 1–30 lie on the Cytoplasmic side of the membrane; it reads MGVRQQLALLLLLLLLLWGLGQPVWPVAVA. 2 consecutive transmembrane segments (helical) span residues 31–51 and 56–76; these read LTLR…LAML and LGPW…LTLL. The Cytoplasmic portion of the chain corresponds to 77 to 690; the sequence is PARLPPGLRW…QAVCEGTWRL (614 aa). An AMP-binding site is contributed by 292–303; that stretch reads FIYTSGTTGLPK. Ser501 carries the phosphoserine modification.

Belongs to the ATP-dependent AMP-binding enzyme family. In terms of tissue distribution, predominantly expressed in liver.

The protein localises to the endoplasmic reticulum membrane. It is found in the microsome. Its subcellular location is the cell membrane. The enzyme catalyses a fatty acid(in) = a fatty acid(out). The catalysed reaction is cholate + ATP + CoA = choloyl-CoA + AMP + diphosphate. It carries out the reaction chenodeoxycholate + ATP + CoA = chenodeoxycholoyl-CoA + AMP + diphosphate. It catalyses the reaction deoxycholate + ATP + CoA = deoxycholoyl-CoA + AMP + diphosphate. The enzyme catalyses lithocholate + ATP + CoA = lithocholoyl-CoA + AMP + diphosphate. The catalysed reaction is (25R)-3alpha,7alpha,12alpha-trihydroxy-5beta-cholestan-26-oate + ATP + CoA = (25R)-3alpha,7alpha,12alpha-trihydroxy-5beta-cholestan-26-oyl-CoA + AMP + diphosphate. It carries out the reaction a very long-chain fatty acid + ATP + CoA = a very long-chain fatty acyl-CoA + AMP + diphosphate. It catalyses the reaction tetracosanoate + ATP + CoA = tetracosanoyl-CoA + AMP + diphosphate. The enzyme catalyses hexacosanoate + ATP + CoA = hexacosanoyl-CoA + AMP + diphosphate. The catalysed reaction is a long-chain fatty acid + ATP + CoA = a long-chain fatty acyl-CoA + AMP + diphosphate. It carries out the reaction octadecanoate + ATP + CoA = octadecanoyl-CoA + AMP + diphosphate. It catalyses the reaction eicosanoate + ATP + CoA = eicosanoyl-CoA + AMP + diphosphate. With respect to regulation, 3-alpha,7-alpha,12-alpha-trihydroxy-5-beta-cholestanate (THCA) inhibits the activation of cholate. In terms of biological role, may mediate the import of long-chain fatty acids (LCFA) by facilitating their transport across cell membranes. Also catalyzes the ATP-dependent formation of fatty acyl-CoA using LCFA and very-long-chain fatty acids (VLCFA) as substrates. Mainly functions as a bile acyl-CoA synthetase catalyzing the activation of bile acids via ATP-dependent formation of bile acid CoA thioesters which is necessary for their subsequent conjugation with glycine or taurine. Both primary bile acids (cholic acid and chenodeoxycholic acid) and secondary bile acids (deoxycholic acid and lithocholic acid) are the principal substrates. In vitro, activates 3-alpha,7-alpha,12-alpha-trihydroxy-5-beta-cholestanate ((25R)-3alpha,7alpha,12alpha-trihydroxy-5beta-cholestan-26-oate or THCA), the C27 precursor of cholic acid deriving from the de novo synthesis from cholesterol. Plays an important role in hepatic fatty acid uptake and bile acid reconjugation and recycling but not in de novo synthesis of bile acids. This chain is Long-chain fatty acid transport protein 5 (SLC27A5), found in Homo sapiens (Human).